The following is a 248-amino-acid chain: 1-(5-phosphoribosyl)-5-[(5-phosphoribosylamino)methylideneamino] imidazole-4-carboxamide isomerase (248 aa).

Asp-8 functions as the Proton acceptor in the catalytic mechanism. Asp-129 acts as the Proton donor in catalysis.

This sequence belongs to the HisA/HisF family.

It localises to the cytoplasm. The catalysed reaction is 1-(5-phospho-beta-D-ribosyl)-5-[(5-phospho-beta-D-ribosylamino)methylideneamino]imidazole-4-carboxamide = 5-[(5-phospho-1-deoxy-D-ribulos-1-ylimino)methylamino]-1-(5-phospho-beta-D-ribosyl)imidazole-4-carboxamide. It functions in the pathway amino-acid biosynthesis; L-histidine biosynthesis; L-histidine from 5-phospho-alpha-D-ribose 1-diphosphate: step 4/9. This chain is 1-(5-phosphoribosyl)-5-[(5-phosphoribosylamino)methylideneamino] imidazole-4-carboxamide isomerase, found in Sinorhizobium medicae (strain WSM419) (Ensifer medicae).